The sequence spans 726 residues: Transferrin (726 aa).

Residues 1–16 form the signal peptide; sequence MLLCLTLLFSASAVLA. 2 consecutive Transferrin-like domains span residues 29–367 and 374–719; these read YKVC…ERDT and VRFC…VIRA. Intrachain disulfides connect C32–C63 and C41–C54. Positions 78 and 111 each coordinate Fe(3+). 4 disulfide bridges follow: C135/C231, C184/C210, C207/C216, and C274/C287. Residues T137, R141, V143, and G144 each coordinate hydrogencarbonate. An N-linked (GlcNAc...) asparagine glycan is attached at N162. A Fe(3+)-binding site is contributed by Y225. N-linked (GlcNAc...) asparagine glycosylation is found at N337 and N358. 2 disulfides stabilise this stretch: C377–C414 and C387–C405. The Fe(3+) site is built by D429 and Y457. C481 and C562 are oxidised to a cystine. The hydrogencarbonate site is built by T483, R487, A489, and G490. Fe(3+) is bound by residues Y573 and H642.

It belongs to the transferrin family.

Its subcellular location is the secreted. In terms of biological role, transferrins are iron binding transport proteins which bind Fe(3+) ion in association with the binding of an anion, usually bicarbonate. This is Transferrin from Blaberus discoidalis (Tropical cockroach).